A 101-amino-acid chain; its full sequence is Large ribosomal subunit protein uL24 (101 aa).

It belongs to the universal ribosomal protein uL24 family. As to quaternary structure, part of the 50S ribosomal subunit.

In terms of biological role, one of two assembly initiator proteins, it binds directly to the 5'-end of the 23S rRNA, where it nucleates assembly of the 50S subunit. Its function is as follows. One of the proteins that surrounds the polypeptide exit tunnel on the outside of the subunit. The polypeptide is Large ribosomal subunit protein uL24 (Streptococcus pyogenes serotype M2 (strain MGAS10270)).